The following is a 1012-amino-acid chain: Axonemal dynein light chain domain-containing protein 1 (1012 aa).

Positions Met-1–Ser-17 are enriched in low complexity. A disordered region spans residues Met-1–Leu-34. 3 coiled-coil regions span residues Gln-317 to Ser-402, Glu-447 to Asp-486, and Ser-572 to Gly-597. Acidic residues predominate over residues Pro-841 to Ser-854. 2 disordered regions span residues Pro-841–Glu-879 and Leu-963–His-1012. 2 stretches are compositionally biased toward basic and acidic residues: residues Lys-855–Glu-879 and Leu-963–Lys-987. Residues Glu-988–Glu-997 show a composition bias toward acidic residues.

Highly expressed in testis. Highly expressed in the round and late spermatids.

The protein localises to the cytoplasm. May be essential for spermiogenesis and male fertility probably by regulating the manchette dynamics, spermatid head shaping and sperm flagellum assembly. This Homo sapiens (Human) protein is Axonemal dynein light chain domain-containing protein 1.